Reading from the N-terminus, the 182-residue chain is Fimbrial subunit type 1 (182 aa).

Residues 1 to 23 form the signal peptide; the sequence is MKIKTLAIVVLSALSLSSAAALA. Residues cysteine 44 and cysteine 84 are joined by a disulfide bond.

This sequence belongs to the fimbrial protein family.

The protein resides in the fimbrium. The sequence is that of Fimbrial subunit type 1 from Klebsiella pneumoniae.